Reading from the N-terminus, the 171-residue chain is Galectin-related protein (171 aa).

Residues 38–170 (PFCGHIKGGM…INGDLQLTKL (133 aa)) form the Galectin domain.

Does not bind lactose, and may not bind carbohydrates. The sequence is that of Galectin-related protein (lgalsl) from Xenopus tropicalis (Western clawed frog).